Here is a 597-residue protein sequence, read N- to C-terminus: uncharacterized protein (597 aa).

A PWWP domain is found at 16-78; the sequence is VGRLVWVRRR…LENSKTVKAF (63 aa). Disordered stretches follow at residues 126 to 210 and 449 to 482; these read NLCN…MRGL and QLKG…STPH. A compositionally biased stretch (basic and acidic residues) spans 134–143; that stretch reads EDSKRCLSGK. The span at 144–161 shows a compositional bias: acidic residues; it reads EDEDSGSSDAEETEDDEL. Positions 166 to 185 are enriched in polar residues; the sequence is EQLQSSISSQEMNNVGASKV. Positions 450-460 are enriched in basic residues; that stretch reads LKGKRNSRQMS. Residues 461-470 are compositionally biased toward basic and acidic residues; that stretch reads KKQEERRNVY.

This is an uncharacterized protein from Arabidopsis thaliana (Mouse-ear cress).